Here is a 134-residue protein sequence, read N- to C-terminus: uncharacterized protein (134 aa).

The region spanning 4 to 107 (IFTKIINREL…PTHSLSNFSF (104 aa)) is the HIT domain. The Histidine triad motif motif lies at 91–95 (HLHIH).

This is an uncharacterized protein from Mycobacterium leprae (strain TN).